The following is a 73-amino-acid chain: Cell division protein ZapB (73 aa).

Residues 3–67 (LELLSKLETK…WNDKVTGLVG (65 aa)) are a coiled coil.

This sequence belongs to the ZapB family. Homodimer. The ends of the coiled-coil dimer bind to each other, forming polymers. Interacts with FtsZ.

It is found in the cytoplasm. Non-essential, abundant cell division factor that is required for proper Z-ring formation. It is recruited early to the divisome by direct interaction with FtsZ, stimulating Z-ring assembly and thereby promoting cell division earlier in the cell cycle. Its recruitment to the Z-ring requires functional FtsA or ZipA. The polypeptide is Cell division protein ZapB (Shewanella sp. (strain ANA-3)).